The primary structure comprises 221 residues: Octanoyltransferase (221 aa).

The region spanning 31 to 216 (GQIGDTLLLL…SLCAIFDLRP (186 aa)) is the BPL/LPL catalytic domain. Residues 76-83 (RGGEVTYH), 145-147 (AIG), and 159-161 (GLA) each bind substrate. The active-site Acyl-thioester intermediate is the Cys177.

It belongs to the LipB family.

The protein resides in the cytoplasm. It carries out the reaction octanoyl-[ACP] + L-lysyl-[protein] = N(6)-octanoyl-L-lysyl-[protein] + holo-[ACP] + H(+). It functions in the pathway protein modification; protein lipoylation via endogenous pathway; protein N(6)-(lipoyl)lysine from octanoyl-[acyl-carrier-protein]: step 1/2. Its function is as follows. Catalyzes the transfer of endogenously produced octanoic acid from octanoyl-acyl-carrier-protein onto the lipoyl domains of lipoate-dependent enzymes. Lipoyl-ACP can also act as a substrate although octanoyl-ACP is likely to be the physiological substrate. This is Octanoyltransferase from Chloroflexus aggregans (strain MD-66 / DSM 9485).